The chain runs to 242 residues: 7-cyano-7-deazaguanine synthase (242 aa).

Positions 1–22 (MNSSSNEKNKDLNRKNFSSKTD) are disordered. Residue 32-42 (LSGGLDSTTCL) participates in ATP binding. The Zn(2+) site is built by Cys-212, Cys-221, Cys-224, and Cys-227.

This sequence belongs to the QueC family. Zn(2+) is required as a cofactor.

The catalysed reaction is 7-carboxy-7-deazaguanine + NH4(+) + ATP = 7-cyano-7-deazaguanine + ADP + phosphate + H2O + H(+). It functions in the pathway purine metabolism; 7-cyano-7-deazaguanine biosynthesis. Its function is as follows. Catalyzes the ATP-dependent conversion of 7-carboxy-7-deazaguanine (CDG) to 7-cyano-7-deazaguanine (preQ(0)). This is 7-cyano-7-deazaguanine synthase from Leptospira interrogans serogroup Icterohaemorrhagiae serovar copenhageni (strain Fiocruz L1-130).